A 97-amino-acid chain; its full sequence is MNIRPLHDRVIIKRQEVESKSAGGIVLTGSAAGKSTRGIVTAVGNGRVLDNGELKALDVKIGDTVIFSEGYGAKIEKIDNEEFLILTESDILAVVED.

It belongs to the GroES chaperonin family. In terms of assembly, heptamer of 7 subunits arranged in a ring. Interacts with the chaperonin GroEL.

It localises to the cytoplasm. In terms of biological role, together with the chaperonin GroEL, plays an essential role in assisting protein folding. The GroEL-GroES system forms a nano-cage that allows encapsulation of the non-native substrate proteins and provides a physical environment optimized to promote and accelerate protein folding. GroES binds to the apical surface of the GroEL ring, thereby capping the opening of the GroEL channel. The sequence is that of Co-chaperonin GroES from Buchnera aphidicola subsp. Pemphigus spyrothecae.